The chain runs to 422 residues: MAFLALGINHKTASVDVRERVAFTPDQMVEALRQLCRVTPTREAAILSTCNRSELYLQQDEVEAEAVLAWLASYHRLSLDELKACAYVHVDDQAVRHMMRVASGLDSLVLGEPQILGQMKSAYAVAREAGSVGPLLGRLFQATFSTAKTVRTDTAIGENPVSVAFAAVSLARQIFSNLQRSQALLIGAGETITLVARHLHEQGVKRIVVANRTLERASALAAELGAHAILLADIPDELHNSDIVISSTASQLPILGKGAVEQALKRRKHKPMFMVDIAVPRDIESQVGELDDVYLYTVDDLHEVVAENLKSRQGAAQAAEELVAAGTEDFMQRLRELAAVDVLKAYRQHAERIRDDELSKAQRLLANGASAEDALAQLARGLTNKLLHAPSVQLKKLSAEGRVEALSMAQELFALHEGTEKP.

Residues Thr-49 to Arg-52, Ser-107, Glu-112 to Gln-114, and Gln-118 contribute to the substrate site. Cys-50 functions as the Nucleophile in the catalytic mechanism. Gly-187–Ile-192 contacts NADP(+).

It belongs to the glutamyl-tRNA reductase family. In terms of assembly, homodimer.

The catalysed reaction is (S)-4-amino-5-oxopentanoate + tRNA(Glu) + NADP(+) = L-glutamyl-tRNA(Glu) + NADPH + H(+). It participates in porphyrin-containing compound metabolism; protoporphyrin-IX biosynthesis; 5-aminolevulinate from L-glutamyl-tRNA(Glu): step 1/2. Catalyzes the NADPH-dependent reduction of glutamyl-tRNA(Glu) to glutamate 1-semialdehyde (GSA). The protein is Glutamyl-tRNA reductase of Stutzerimonas stutzeri (strain A1501) (Pseudomonas stutzeri).